A 566-amino-acid chain; its full sequence is Phosphatidylinositol 4-kinase gamma 4 (566 aa).

2 consecutive Ubiquitin-like domains span residues 34–111 (TIMI…SDLQ) and 112–190 (VLDV…AKVR). Positions 250–263 (DGLKSGNSPVRSSE) are enriched in polar residues. The disordered stretch occupies residues 250–272 (DGLKSGNSPVRSSEGTGGAYFMQ). Positions 255–547 (GNSPVRSSEG…AVLPGTSEAA (293 aa)) constitute a PI3K/PI4K catalytic domain. Residues 261-267 (SSEGTGG) are G-loop. Residues 262–268 (SEGTGGA), K284, and 374–377 (QMFT) each bind ATP. Positions 407–415 (ANADRHGGN) are catalytic loop. Residues 430–456 (PIDHGYCLPESFEDCTFEWLYWPQARK) are activation loop. D432 contributes to the ATP binding site.

Belongs to the PI3/PI4-kinase family. Type II PI4K subfamily. Interacts with RPN10, UFD1 and CDC48 in vitro. Post-translationally, autophosphorylated.

Its subcellular location is the membrane. It catalyses the reaction a 1,2-diacyl-sn-glycero-3-phospho-(1D-myo-inositol) + ATP = a 1,2-diacyl-sn-glycero-3-phospho-(1D-myo-inositol 4-phosphate) + ADP + H(+). Its function is as follows. The phosphorylation of phosphatidylinositol (PI) to PI4P is the first committed step in the generation of phosphatidylinositol 4,5-bisphosphate (PIP2), a precursor of the second messenger inositol 1,4,5-trisphosphate (InsP3). Undergoes autophosphorylation and phosphorylates serine/threonine residues of protein substrates. Phosphorylates RPN10 and UFD1 in vitro. The sequence is that of Phosphatidylinositol 4-kinase gamma 4 from Arabidopsis thaliana (Mouse-ear cress).